Consider the following 601-residue polypeptide: Elongation factor 4 (601 aa).

In terms of domain architecture, tr-type G spans 6–188 (SRTRNFSIIA…DIVKNVPPPK (183 aa)). GTP contacts are provided by residues 18 to 23 (DHGKST) and 135 to 138 (NKID).

This sequence belongs to the TRAFAC class translation factor GTPase superfamily. Classic translation factor GTPase family. LepA subfamily.

The protein localises to the cell membrane. The enzyme catalyses GTP + H2O = GDP + phosphate + H(+). In terms of biological role, required for accurate and efficient protein synthesis under certain stress conditions. May act as a fidelity factor of the translation reaction, by catalyzing a one-codon backward translocation of tRNAs on improperly translocated ribosomes. Back-translocation proceeds from a post-translocation (POST) complex to a pre-translocation (PRE) complex, thus giving elongation factor G a second chance to translocate the tRNAs correctly. Binds to ribosomes in a GTP-dependent manner. The sequence is that of Elongation factor 4 from Clostridioides difficile (strain 630) (Peptoclostridium difficile).